A 326-amino-acid chain; its full sequence is MLTFARQQQRRNVRWLLSLSLLVLLATLLSLCAGEQWIAPGDWLSARGELFVWQIRLPRTLAVLLVGAALALSGAVMQALFENPLAEPGLLGVSNGAGVGLIAAVLLGQGQLAGWALGLCAIAGALIITLILLRFARRHLSTSRLLLAGVALGIICSALMTWAIYFSTSFDLRQLMYWMMGGFGGVDWQQSWLMIALIPVLIWICCQSQPLNMLALGETSARQLGLPLWFWRNLLVVATGWMVGVSVAMAGAIGFIGLVIPHILRLCGLTDHRVLLPGCALAGAIALLLADVVARLALASAELPIGVVTATLGAPVFIWLLLKSAR.

Transmembrane regions (helical) follow at residues 17 to 39, 59 to 81, 88 to 107, 111 to 133, 146 to 168, 188 to 205, 242 to 264, 274 to 296, and 303 to 322; these read LSLSLLVLLATLLSLCAGEQWIA, RTLAVLLVGAALALSGAVMQALF, PGLLGVSNGAGVGLIAAVLL, QLAGWALGLCAIAGALIITLILL, LLAGVALGIICSALMTWAIYFST, WQQSWLMIALIPVLIWIC, MVGVSVAMAGAIGFIGLVIPHIL, VLLPGCALAGAIALLLADVVARL, and LPIGVVTATLGAPVFIWLLL.

The protein belongs to the binding-protein-dependent transport system permease family. FecCD subfamily. In terms of assembly, the complex is composed of two ATP-binding proteins (BtuD), two transmembrane proteins (BtuC) and a solute-binding protein (BtuF).

It is found in the cell inner membrane. Part of the ABC transporter complex BtuCDF involved in vitamin B12 import. Involved in the translocation of the substrate across the membrane. The chain is Vitamin B12 import system permease protein BtuC from Salmonella paratyphi A (strain ATCC 9150 / SARB42).